The chain runs to 414 residues: Gamma-glutamyl phosphate reductase (414 aa).

The protein belongs to the gamma-glutamyl phosphate reductase family.

It localises to the cytoplasm. The enzyme catalyses L-glutamate 5-semialdehyde + phosphate + NADP(+) = L-glutamyl 5-phosphate + NADPH + H(+). It functions in the pathway amino-acid biosynthesis; L-proline biosynthesis; L-glutamate 5-semialdehyde from L-glutamate: step 2/2. Functionally, catalyzes the NADPH-dependent reduction of L-glutamate 5-phosphate into L-glutamate 5-semialdehyde and phosphate. The product spontaneously undergoes cyclization to form 1-pyrroline-5-carboxylate. The chain is Gamma-glutamyl phosphate reductase from Thermoanaerobacter sp. (strain X514).